The following is a 134-amino-acid chain: Parvalbumin-like EF-hand-containing protein (134 aa).

2 consecutive EF-hand domains span residues 55–90 and 96–131; these read QLDDAIHTAFQSLDKDKSGFIEWNEIKYILSIIPSS and LTDEEAEAMIQAADTHGDGRINYEEFSELIKKEKIP. The Ca(2+) site is built by D68, D70, S72, F74, E76, E79, D109, D113, and E120.

This sequence belongs to the parvalbumin family.

The sequence is that of Parvalbumin-like EF-hand-containing protein from Homo sapiens (Human).